The following is a 412-amino-acid chain: Subtilisin-like protease 6 (412 aa).

The signal sequence occupies residues 1 to 20; it reads MGFITKAIPIVLAALSTVNG. A propeptide spanning residues 21-127 is cleaved from the precursor; the sequence is AKILEAGPHA…VRTSTNGTNL (107 aa). The region spanning 36 to 120 is the Inhibitor I9 domain; it reads KYIVVMKREV…YIEPDFVVRT (85 aa). 2 N-linked (GlcNAc...) asparagine glycosylation sites follow: asparagine 123 and asparagine 126. Positions 135-412 constitute a Peptidase S8 domain; sequence SWGLARVSSK…SKLIYNGSGK (278 aa). Catalysis depends on charge relay system residues aspartate 167 and histidine 198. 2 N-linked (GlcNAc...) asparagine glycosylation sites follow: asparagine 252 and asparagine 264. Serine 358 (charge relay system) is an active-site residue. Asparagine 408 carries N-linked (GlcNAc...) asparagine glycosylation.

This sequence belongs to the peptidase S8 family.

The protein localises to the secreted. Its function is as follows. Secreted subtilisin-like serine protease with keratinolytic activity that contributes to pathogenicity. This Trichophyton tonsurans (Scalp ringworm fungus) protein is Subtilisin-like protease 6 (SUB6).